The following is a 286-amino-acid chain: ATP synthase gamma chain (286 aa).

The protein belongs to the ATPase gamma chain family. In terms of assembly, F-type ATPases have 2 components, CF(1) - the catalytic core - and CF(0) - the membrane proton channel. CF(1) has five subunits: alpha(3), beta(3), gamma(1), delta(1), epsilon(1). CF(0) has three main subunits: a, b and c.

It localises to the cell inner membrane. Produces ATP from ADP in the presence of a proton gradient across the membrane. The gamma chain is believed to be important in regulating ATPase activity and the flow of protons through the CF(0) complex. The chain is ATP synthase gamma chain from Marinomonas sp. (strain MWYL1).